Reading from the N-terminus, the 691-residue chain is Lipase 2 (691 aa).

A signal peptide spans methionine 1–alanine 37. The segment at glutamate 34–lysine 267 is disordered. Residues serine 38–lysine 296 constitute a propeptide that is removed on maturation. Over residues isoleucine 41–lysine 72 the composition is skewed to polar residues. A compositionally biased stretch (basic and acidic residues) spans glutamine 73 to glycine 82. Polar residues-rich tracts occupy residues leucine 94 to glutamine 115, serine 125 to asparagine 135, aspartate 142 to isoleucine 172, and proline 186 to lysine 196. Composition is skewed to basic and acidic residues over residues threonine 197–asparagine 214 and lysine 258–lysine 267. The active-site Nucleophile is serine 413. Glycine 580 serves as a coordination point for Ca(2+). Catalysis depends on aspartate 604, which acts as the Charge relay system. Aspartate 645 contacts Ca(2+). Histidine 646 acts as the Charge relay system in catalysis. Ca(2+) contacts are provided by aspartate 648, aspartate 653, and aspartate 656.

Belongs to the AB hydrolase superfamily. Lipase family.

It localises to the secreted. It carries out the reaction a triacylglycerol + H2O = a diacylglycerol + a fatty acid + H(+). This is Lipase 2 (lip2) from Staphylococcus aureus (strain MRSA252).